The sequence spans 201 residues: Small ribosomal subunit protein uS4c (201 aa).

The region spanning Met-89–Asn-150 is the S4 RNA-binding domain.

The protein belongs to the universal ribosomal protein uS4 family. In terms of assembly, part of the 30S ribosomal subunit. Contacts protein S5. The interaction surface between S4 and S5 is involved in control of translational fidelity.

It is found in the plastid. It localises to the chloroplast. Its function is as follows. One of the primary rRNA binding proteins, it binds directly to 16S rRNA where it nucleates assembly of the body of the 30S subunit. In terms of biological role, with S5 and S12 plays an important role in translational accuracy. This Phalaenopsis aphrodite subsp. formosana (Moth orchid) protein is Small ribosomal subunit protein uS4c (rps4).